Consider the following 95-residue polypeptide: Putative pterin-4-alpha-carbinolamine dehydratase (95 aa).

The protein belongs to the pterin-4-alpha-carbinolamine dehydratase family.

The enzyme catalyses (4aS,6R)-4a-hydroxy-L-erythro-5,6,7,8-tetrahydrobiopterin = (6R)-L-erythro-6,7-dihydrobiopterin + H2O. The polypeptide is Putative pterin-4-alpha-carbinolamine dehydratase (Prochlorococcus marinus (strain NATL2A)).